We begin with the raw amino-acid sequence, 268 residues long: Glucosamine-6-phosphate deaminase (268 aa).

Residue Asp-72 is the Proton acceptor; for enolization step of the active site. Asp-141 serves as the catalytic For ring-opening step. His-143 (proton acceptor; for ring-opening step) is an active-site residue. Glu-148 serves as the catalytic For ring-opening step.

The protein belongs to the glucosamine/galactosamine-6-phosphate isomerase family. NagB subfamily. Homohexamer.

The catalysed reaction is alpha-D-glucosamine 6-phosphate + H2O = beta-D-fructose 6-phosphate + NH4(+). The protein operates within amino-sugar metabolism; N-acetylneuraminate degradation; D-fructose 6-phosphate from N-acetylneuraminate: step 5/5. Its activity is regulated as follows. Allosterically activated by N-acetylglucosamine 6-phosphate (GlcNAc6P). In terms of biological role, catalyzes the reversible isomerization-deamination of glucosamine 6-phosphate (GlcN6P) to form fructose 6-phosphate (Fru6P) and ammonium ion. This is Glucosamine-6-phosphate deaminase from Histophilus somni (strain 2336) (Haemophilus somnus).